We begin with the raw amino-acid sequence, 395 residues long: uncharacterized protein (395 aa).

Disordered stretches follow at residues 1 to 121 (MLLP…TANS), 136 to 187 (MRMK…LDRN), 308 to 335 (QNNE…SKDE), and 365 to 395 (IQKF…NEGD). The segment covering 13-28 (PKGEAKSLVARERKSQ) has biased composition (basic and acidic residues). The span at 64–73 (KSAKLRRKKS) shows a compositional bias: basic residues. Over residues 97–111 (SIEKKKEEMTSKLPE) the composition is skewed to basic and acidic residues. Residues 144-164 (TSRMATKSDSSLETMPESSHN) are compositionally biased toward polar residues. The span at 170-179 (KSRKSQRTRG) shows a compositional bias: basic residues. Basic residues predominate over residues 365 to 377 (IQKFRKKYQKQLK). A compositionally biased stretch (basic and acidic residues) spans 378 to 395 (KSQEEKKDDTKTAKNEGD).

This is an uncharacterized protein from Caenorhabditis elegans.